Here is a 146-residue protein sequence, read N- to C-terminus: Cyanate hydratase (146 aa).

Active-site residues include Arg87, Glu90, and Ser113.

It belongs to the cyanase family.

The catalysed reaction is cyanate + hydrogencarbonate + 3 H(+) = NH4(+) + 2 CO2. In terms of biological role, catalyzes the reaction of cyanate with bicarbonate to produce ammonia and carbon dioxide. The sequence is that of Cyanate hydratase from Teredinibacter turnerae (strain ATCC 39867 / T7901).